Reading from the N-terminus, the 121-residue chain is Large ribosomal subunit protein bL20 (121 aa).

It belongs to the bacterial ribosomal protein bL20 family.

In terms of biological role, binds directly to 23S ribosomal RNA and is necessary for the in vitro assembly process of the 50S ribosomal subunit. It is not involved in the protein synthesizing functions of that subunit. This chain is Large ribosomal subunit protein bL20, found in Francisella tularensis subsp. mediasiatica (strain FSC147).